Consider the following 1286-residue polypeptide: X-linked retinitis pigmentosa GTPase regulator-interacting protein 1 (1286 aa).

The tract at residues 144–193 is disordered; sequence QVGHRQLHTAGAPVPEKPKRGPRDRLSYTAPPSFKEHATNENRGEVASKP. Basic and acidic residues-rich tracts occupy residues 159–169 and 177–189; these read EKPKRGPRDRL and FKEH…RGEV. Residues 294 to 584 are a coiled coil; the sequence is KAQLTEVQEA…LEGILRSHDL (291 aa). The region spanning 781-906 is the C2 domain; sequence GGRKAQEEEF…AKNESIKGDF (126 aa). Disordered regions lie at residues 934-1008 and 1058-1108; these read SFLK…RKHG and EEEE…PMSQ. 3 stretches are compositionally biased toward basic and acidic residues: residues 940–960, 988–998, and 1070–1084; these read AQTK…EEKA, HGGERKEKEHQ, and KQKE…KESS. Residues 1085–1096 are compositionally biased toward polar residues; sequence EQGSEVSEAQTT. An interaction with RPGR region spans residues 1091–1281; it reads SEAQTTDSDD…VLHAIYKEMT (191 aa).

The protein belongs to the RPGRIP1 family. As to quaternary structure, forms homodimers and elongated homopolymers. Interacts with RPGR. Interacts with NPHP4. Interacts with NEK4. Interacts with SPATA7. Interacts with CEP290/NPHP6; mediating the association between RPGR and CEP290/NPHP6. As to expression, strong expression in retina, with weaker expression in testis. Expressed in other neurons such as amacrine cells. Colocalizes with RGPR in the outer segment of rod photoreceptors and cone outer segments.

The protein localises to the cell projection. It localises to the cilium. Functionally, may function as scaffolding protein. Required for normal location of RPGR at the connecting cilium of photoreceptor cells. Required for normal disk morphogenesis and disk organization in the outer segment of photoreceptor cells and for survival of photoreceptor cells. The sequence is that of X-linked retinitis pigmentosa GTPase regulator-interacting protein 1 (RPGRIP1) from Homo sapiens (Human).